Here is a 368-residue protein sequence, read N- to C-terminus: Phosphate acyltransferase (368 aa).

The interval 338 to 368 (GDGGHDAGGAGTASPAPGHHAEPSAAQSSKA) is disordered.

This sequence belongs to the PlsX family. As to quaternary structure, homodimer. Probably interacts with PlsY.

Its subcellular location is the cytoplasm. The enzyme catalyses a fatty acyl-[ACP] + phosphate = an acyl phosphate + holo-[ACP]. Its pathway is lipid metabolism; phospholipid metabolism. Its function is as follows. Catalyzes the reversible formation of acyl-phosphate (acyl-PO(4)) from acyl-[acyl-carrier-protein] (acyl-ACP). This enzyme utilizes acyl-ACP as fatty acyl donor, but not acyl-CoA. In Burkholderia ambifaria (strain MC40-6), this protein is Phosphate acyltransferase.